A 439-amino-acid polypeptide reads, in one-letter code: Glutamate--tRNA ligase 2 (439 aa).

Residues 6 to 16 carry the 'HIGH' region motif; it reads PSPTGDMHIGN. The 'KMSKS' region signature appears at 232 to 236; it reads KMSKR. Residue Lys235 coordinates ATP.

Belongs to the class-I aminoacyl-tRNA synthetase family. Glutamate--tRNA ligase type 1 subfamily. As to quaternary structure, monomer.

Its subcellular location is the cytoplasm. The enzyme catalyses tRNA(Glu) + L-glutamate + ATP = L-glutamyl-tRNA(Glu) + AMP + diphosphate. Its function is as follows. Catalyzes the attachment of glutamate to tRNA(Glu) in a two-step reaction: glutamate is first activated by ATP to form Glu-AMP and then transferred to the acceptor end of tRNA(Glu). The protein is Glutamate--tRNA ligase 2 of Helicobacter pylori (strain Shi470).